The following is a 394-amino-acid chain: Protein TsgA homolog (394 aa).

12 consecutive transmembrane segments (helical) span residues 11 to 31 (WISYLSYALTGALVIVTGIVM), 51 to 71 (FLNAGILISIFLNAWLMEIIP), 76 to 96 (LVFGFILMLIAIAGLMVGHNL), 101 to 121 (ISMFIFGVVSGITMSIGTFLV), 134 to 154 (LLFTDSFFSMAGMIFPIAAAM), 162 to 182 (WYWVYACIGLLYVGIFVLTLC), 206 to 226 (VGVLFLAIAALCYILGQLGFI), 246 to 266 (QLVSNFWISYMIGMWIFSFIL), 274 to 294 (IVTVLAAMATLAMYLFVSTDN), 302 to 322 (ILALGFVSSAIYTTLITLGSL), 334 to 354 (FILTCGTVGTMLTFVVTGPIV), and 363 to 383 (LATANGLYLAVFILCLALGFF).

The protein belongs to the major facilitator superfamily. TsgA family.

It localises to the cell inner membrane. The sequence is that of Protein TsgA homolog from Yersinia pseudotuberculosis serotype O:1b (strain IP 31758).